Here is a 213-residue protein sequence, read N- to C-terminus: NADH-quinone oxidoreductase subunit C (213 aa).

Belongs to the complex I 30 kDa subunit family. In terms of assembly, NDH-1 is composed of 15 different subunits. Subunits NuoB, C, D, E, F, and G constitute the peripheral sector of the complex.

Its subcellular location is the cell membrane. The catalysed reaction is a quinone + NADH + 5 H(+)(in) = a quinol + NAD(+) + 4 H(+)(out). Functionally, NDH-1 shuttles electrons from NADH, via FMN and iron-sulfur (Fe-S) centers, to quinones in the respiratory chain. The immediate electron acceptor for the enzyme in this species is believed to be a menaquinone. Couples the redox reaction to proton translocation (for every two electrons transferred, four hydrogen ions are translocated across the cytoplasmic membrane), and thus conserves the redox energy in a proton gradient. This chain is NADH-quinone oxidoreductase subunit C, found in Deinococcus geothermalis (strain DSM 11300 / CIP 105573 / AG-3a).